The primary structure comprises 72 residues: Small ribosomal subunit protein bS18c (72 aa).

The protein belongs to the bacterial ribosomal protein bS18 family. As to quaternary structure, part of the 30S ribosomal subunit.

It localises to the plastid. The protein resides in the chloroplast. In Emiliania huxleyi (Coccolithophore), this protein is Small ribosomal subunit protein bS18c.